The sequence spans 332 residues: Endonuclease 8-like 2 (332 aa).

The active-site Schiff-base intermediate with DNA is the P2. Residue E3 is the Proton donor of the active site. The active-site Proton donor; for beta-elimination activity is K50. K50 bears the N6-acetyllysine mark. The interval 56-121 (FDPDEEMGPP…EDDSEYLERD (66 aa)) is disordered. S68 is subject to Phosphoserine. The span at 74 to 84 (PQKEAQKEGAA) shows a compositional bias: basic and acidic residues. Residues 94-105 (GQKTPDGSSQSA) are compositionally biased toward polar residues. K154 is subject to N6-acetyllysine. N231 serves as a coordination point for DNA. Residues 284–320 (QVYQREQCPAGHQVMKEAFGPQDGLQRLTWWCPQCQP) form an FPG-type zinc finger. R310 acts as the Proton donor; for delta-elimination activity in catalysis.

The protein belongs to the FPG family. Binds EP300.

It is found in the nucleus. The enzyme catalyses 2'-deoxyribonucleotide-(2'-deoxyribose 5'-phosphate)-2'-deoxyribonucleotide-DNA = a 3'-end 2'-deoxyribonucleotide-(2,3-dehydro-2,3-deoxyribose 5'-phosphate)-DNA + a 5'-end 5'-phospho-2'-deoxyribonucleoside-DNA + H(+). Acetylation of Lys-50 leads to loss of DNA nicking activity. Functionally, involved in base excision repair of DNA damaged by oxidation or by mutagenic agents. Has DNA glycosylase activity towards 5-hydroxyuracil and other oxidized derivatives of cytosine with a preference for mismatched double-stranded DNA (DNA bubbles). Has low or no DNA glycosylase activity towards thymine glycol, 2-hydroxyadenine, hypoxanthine and 8-oxoguanine. Has AP (apurinic/apyrimidinic) lyase activity and introduces nicks in the DNA strand. Cleaves the DNA backbone by beta-delta elimination to generate a single-strand break at the site of the removed base with both 3'- and 5'-phosphates. The polypeptide is Endonuclease 8-like 2 (NEIL2) (Pongo abelii (Sumatran orangutan)).